The following is a 652-amino-acid chain: Acetyl-coenzyme A synthetase (652 aa).

CoA is bound by residues 189-192 (RGDK) and T311. Residues 387-389 (GEP), 411-416 (DTWWQT), D500, and R515 contribute to the ATP site. S523 contributes to the CoA binding site. R526 contacts ATP. H539 and V542 together coordinate Mg(2+). R584 is a binding site for CoA. K609 carries the N6-acetyllysine modification.

Belongs to the ATP-dependent AMP-binding enzyme family. Mg(2+) serves as cofactor. Acetylated. Deacetylation by the SIR2-homolog deacetylase activates the enzyme.

The catalysed reaction is acetate + ATP + CoA = acetyl-CoA + AMP + diphosphate. Catalyzes the conversion of acetate into acetyl-CoA (AcCoA), an essential intermediate at the junction of anabolic and catabolic pathways. AcsA undergoes a two-step reaction. In the first half reaction, AcsA combines acetate with ATP to form acetyl-adenylate (AcAMP) intermediate. In the second half reaction, it can then transfer the acetyl group from AcAMP to the sulfhydryl group of CoA, forming the product AcCoA. The polypeptide is Acetyl-coenzyme A synthetase (Bartonella bacilliformis (strain ATCC 35685 / KC583 / Herrer 020/F12,63)).